Reading from the N-terminus, the 92-residue chain is Phospholemman (92 aa).

The N-terminal stretch at 1 to 20 (MASLSHILVLCVGLLAMVNA) is a signal peptide. The Extracellular portion of the chain corresponds to 21–35 (EAPQEHDPFTYDYQS). A helical membrane pass occupies residues 36–56 (LRIGGLIIAGILFILGILIVL). The Cytoplasmic portion of the chain corresponds to 57–92 (SRRCRCKFNQQQRTGEPDEEEGTFRSSIRRLSTRRR). Cys-60 is lipidated: S-palmitoyl cysteine. At Cys-62 the chain carries S-glutathionyl cysteine; alternate. Cys-62 carries the S-palmitoyl cysteine; alternate lipid modification. Residues 65–92 (NQQQRTGEPDEEEGTFRSSIRRLSTRRR) form a disordered region. A Phosphothreonine modification is found at Thr-79. Ser-82 is subject to Phosphoserine. Ser-83 is subject to Phosphoserine; by PKA and PKC. Over residues 83-92 (SIRRLSTRRR) the composition is skewed to basic residues. Phosphoserine; by PKA is present on Ser-88. Thr-89 is subject to Phosphothreonine; by PKC.

The protein belongs to the FXYD family. In terms of assembly, homotetramer. Monomer. Regulatory subunit of the sodium/potassium-transporting ATPase (NKA) which is composed of a catalytic alpha subunit, an auxiliary non-catalytic beta subunit and an additional regulatory subunit. The monomeric form associates with NKA while the oligomeric form does not. Interacts with the catalytic alpha-1 subunit ATP1A1. Also interacts with the catalytic alpha-2 and alpha-3 subunits ATP1A2 and ATP1A3. Very little interaction with ATP1A1, ATP1A2 or ATP1A3 when phosphorylated at Ser-83. Interacts with the non-catalytic beta-1 subunit ATP1B1. Oxidative stress decreases interaction with ATP1A1 but increases interaction with ATP1B1. Post-translationally, major plasma membrane substrate for cAMP-dependent protein kinase (PKA) and protein kinase C (PKC) in several different tissues. Phosphorylated in response to insulin and adrenergic stimulation. Phosphorylation at Ser-88 stimulates sodium/potassium-transporting ATPase activity while the unphosphorylated form inhibits sodium/potassium-transporting ATPase activity. Phosphorylation increases tetramerization, decreases binding to ATP1A1 and reduces inhibition of ATP1A1 activity. Phosphorylation at Ser-83 leads to greatly reduced interaction with ATP1A1, ATP1A2 and ATP1A3. May be phosphorylated by DMPK. In terms of processing, palmitoylation increases half-life and stability and is enhanced upon phosphorylation at Ser-88 by PKA. In terms of tissue distribution, in the brain, detected in cerebellum and choroid plexus (at protein level).

It localises to the cell membrane. Its subcellular location is the sarcolemma. The protein localises to the apical cell membrane. The protein resides in the membrane. It is found in the caveola. It localises to the T-tubule. In terms of biological role, associates with and regulates the activity of the sodium/potassium-transporting ATPase (NKA) which transports Na(+) out of the cell and K(+) into the cell. Inhibits NKA activity in its unphosphorylated state and stimulates activity when phosphorylated. Reduces glutathionylation of the NKA beta-1 subunit ATP1B1, thus reversing glutathionylation-mediated inhibition of ATP1B1. Contributes to female sexual development by maintaining the excitability of neurons which secrete gonadotropin-releasing hormone. This Bos taurus (Bovine) protein is Phospholemman.